A 346-amino-acid polypeptide reads, in one-letter code: Phosphoribosylformylglycinamidine cyclo-ligase (346 aa).

Belongs to the AIR synthase family.

It is found in the cytoplasm. The catalysed reaction is 2-formamido-N(1)-(5-O-phospho-beta-D-ribosyl)acetamidine + ATP = 5-amino-1-(5-phospho-beta-D-ribosyl)imidazole + ADP + phosphate + H(+). Its pathway is purine metabolism; IMP biosynthesis via de novo pathway; 5-amino-1-(5-phospho-D-ribosyl)imidazole from N(2)-formyl-N(1)-(5-phospho-D-ribosyl)glycinamide: step 2/2. This is Phosphoribosylformylglycinamidine cyclo-ligase from Bacillus cereus (strain ZK / E33L).